Consider the following 122-residue polypeptide: Large ribosomal subunit protein uL14 (122 aa).

It belongs to the universal ribosomal protein uL14 family. Part of the 50S ribosomal subunit. Forms a cluster with proteins L3 and L19. In the 70S ribosome, L14 and L19 interact and together make contacts with the 16S rRNA in bridges B5 and B8.

Binds to 23S rRNA. Forms part of two intersubunit bridges in the 70S ribosome. In Campylobacter concisus (strain 13826), this protein is Large ribosomal subunit protein uL14.